Reading from the N-terminus, the 68-residue chain is Large ribosomal subunit protein uL29 (68 aa).

The protein belongs to the universal ribosomal protein uL29 family.

The protein is Large ribosomal subunit protein uL29 of Streptococcus pneumoniae (strain JJA).